The primary structure comprises 1325 residues: Clustered mitochondria protein homolog (1325 aa).

The 263-residue stretch at 311 to 573 folds into the Clu domain; it reads PKHESDPMRT…RHTPMDVTWL (263 aa). Disordered stretches follow at residues 893 to 937, 1032 to 1063, and 1245 to 1325; these read KHAE…PLRT, DSNQ…DDQL, and QHAR…AKRS. The segment covering 1265–1275 has biased composition (basic residues); the sequence is SAHHHHHRHLH. A compositionally biased stretch (low complexity) spans 1276–1285; it reads QQQQNSSSSP. A compositionally biased stretch (basic residues) spans 1314–1325; the sequence is AARKRAARAKRS.

It belongs to the CLU family. As to quaternary structure, may associate with the eukaryotic translation initiation factor 3 (eIF-3) complex.

The protein localises to the cytoplasm. MRNA-binding protein involved in proper cytoplasmic distribution of mitochondria. This is Clustered mitochondria protein homolog from Malassezia globosa (strain ATCC MYA-4612 / CBS 7966) (Dandruff-associated fungus).